The primary structure comprises 411 residues: MKMVLSQRQREELNQAIADYLGSNGYADSLEAFRKEADLSTEAEKKFGGLLEKKWTSVIRLQKKVMELEAKLTEAEKEVIEGAPTKNKRTPGEWIPRPPEKYSMSGHRASITRVIFHPIFGLVVSASEDATIKIWDFETGEYERSLKGHTDSVQDVAFDAQGKLLASCSADLSIKLWDFQQTYECVKTMHGHDHNVSSVAFVPAGDYVLSASRDRTVKMWEVATGYCVKTYTGHREWVRMVRVHIEGSIFATCSNDHTIRVWLTNSRDCKVELRDHEHTVECIAWAPEAAASAINEAAGADNKKGHHQGPFLASGSRDKTIRIWDVSVGLCLFTLNGHDNWVRGLAFHPAGKYLVSASDDKTIRVWDLRNKRCMKTLYAHQHFCTSIDFHKAHPYVISGSVDQTVKVWECR.

Positions 9–41 (QREELNQAIADYLGSNGYADSLEAFRKEADLST) constitute a LisH domain. Residues 56-83 (TSVIRLQKKVMELEAKLTEAEKEVIEGA) adopt a coiled-coil conformation. 7 WD repeats span residues 106–147 (GHRA…RSLK), 148–187 (GHTDSVQDVAFDAQGKLLASCSADLSIKLWDFQQTYECVK), 191–230 (GHDHNVSSVAFVPAGDYVLSASRDRTVKMWEVATGYCVKT), 233–272 (GHREWVRMVRVHIEGSIFATCSNDHTIRVWLTNSRDCKVE), 275–334 (DHEH…CLFT), 337–376 (GHDNWVRGLAFHPAGKYLVSASDDKTIRVWDLRNKRCMKT), and 379–411 (AHQHFCTSIDFHKAHPYVISGSVDQTVKVWECR).

Belongs to the WD repeat LIS1/nudF family.

It is found in the cytoplasm. It localises to the cytoskeleton. The protein resides in the microtubule organizing center. The protein localises to the centrosome. Functionally, positively regulates the activity of the minus-end directed microtubule motor protein dynein. May enhance dynein-mediated microtubule sliding by targeting dynein to the microtubule plus end. Required for several dynein- and microtubule-dependent processes. The sequence is that of Lissencephaly-1 homolog from Drosophila ananassae (Fruit fly).